Here is a 458-residue protein sequence, read N- to C-terminus: NADH-quinone oxidoreductase subunit N (458 aa).

14 helical membrane-spanning segments follow: residues 4–24 (LLPEITLTLIALLGQFFAVII), 30–50 (IISNIIILLCILSIFLTFKYS), 62–82 (GINIGISKSIVLLFTIISMII), 94–114 (LKFEFITLILLSVVGIFVAIS), 118–138 (FLLLFCGMELTALTSYALAGF), 153–173 (FILGSLVSCLSLFGISFIYGF), 194–214 (LGLIIGIVLFLSSIFFKLSSV), 235–255 (FTAASKIGMVIVLLNISKLII), 261–281 (INYNLIKIIAILSMLFGAFGA), 290–310 (LMAYSTILNIGYVLIGVLLHN), 318–338 (LLYILIYAVGSIGFFTCLIML), 361–381 (IAAIISIVMFSMIGIPPLTGF), 397–417 (FILAYCGIFTSVVAAFYYLKV), and 438–458 (LLLINYLVVGFLLLGSFIISF).

It belongs to the complex I subunit 2 family. As to quaternary structure, NDH-1 is composed of 14 different subunits. Subunits NuoA, H, J, K, L, M, N constitute the membrane sector of the complex.

The protein localises to the cell inner membrane. It catalyses the reaction a quinone + NADH + 5 H(+)(in) = a quinol + NAD(+) + 4 H(+)(out). In terms of biological role, NDH-1 shuttles electrons from NADH, via FMN and iron-sulfur (Fe-S) centers, to quinones in the respiratory chain. The immediate electron acceptor for the enzyme in this species is believed to be ubiquinone. Couples the redox reaction to proton translocation (for every two electrons transferred, four hydrogen ions are translocated across the cytoplasmic membrane), and thus conserves the redox energy in a proton gradient. The sequence is that of NADH-quinone oxidoreductase subunit N from Rickettsia felis (strain ATCC VR-1525 / URRWXCal2) (Rickettsia azadi).